A 194-amino-acid chain; its full sequence is Prefoldin subunit 3 (194 aa).

This sequence belongs to the prefoldin subunit alpha family. Heterohexamer of two PFD-alpha type and four PFD-beta type subunits. Interacts with itself. Interacts with Vhl and betaTub56D/tubulin beta-1 chain. Interacts with tubulin alpha-beta heterodimers by itself or in complex with Vhl. Does not interact with microtubules (MTs). Expressed in larval central nervous system (CNS) and pupal testis (at protein level).

The protein resides in the cytoplasm. Its function is as follows. Binds specifically to cytosolic chaperonin (c-CPN) and transfers target proteins to it. Binds to nascent polypeptide chain and promotes folding in an environment in which there are many competing pathways for nonnative proteins. Required for tubulin stability and spindle and centrosome formation in cooperation with Vhl. The polypeptide is Prefoldin subunit 3 (mgr) (Drosophila melanogaster (Fruit fly)).